Reading from the N-terminus, the 704-residue chain is Elongation factor G (704 aa).

One can recognise a tr-type G domain in the interval 8 to 291; that stretch reads DRVRNIGIMA…AVIEYLASPV (284 aa). GTP-binding positions include 17-24, 90-94, and 144-147; these read AHIDAGKT, DTPGH, and NKMD.

Belongs to the TRAFAC class translation factor GTPase superfamily. Classic translation factor GTPase family. EF-G/EF-2 subfamily.

The protein localises to the cytoplasm. Its function is as follows. Catalyzes the GTP-dependent ribosomal translocation step during translation elongation. During this step, the ribosome changes from the pre-translocational (PRE) to the post-translocational (POST) state as the newly formed A-site-bound peptidyl-tRNA and P-site-bound deacylated tRNA move to the P and E sites, respectively. Catalyzes the coordinated movement of the two tRNA molecules, the mRNA and conformational changes in the ribosome. The protein is Elongation factor G of Chlorobium chlorochromatii (strain CaD3).